Here is a 249-residue protein sequence, read N- to C-terminus: NAD(P)H-quinone oxidoreductase subunit T, chloroplastic (249 aa).

A chloroplast-targeting transit peptide spans 1–45 (MAYATSTYARTSCIILPKIQNGAHFTDDTKAFRRITARRVTRIYA). The segment at 44–84 (YASQGPTKPSKPSPGVDTRIHWESPDEGWIGGRSDPAKSVD) is disordered. Positions 106–172 (SHYQFLGVST…ETRRFYDWTL (67 aa)) constitute a J domain. A helical membrane pass occupies residues 224–244 (LTFDILIVLFAVCCIAFVIVF).

In terms of assembly, part of the chloroplast NDH complex, composed of a mixture of chloroplast and nucleus encoded subunits. Component of the electron donor-binding subcomplex, at least composed of NDHS, NDHT and NDHU.

It localises to the plastid. The protein resides in the chloroplast thylakoid membrane. It carries out the reaction a plastoquinone + NADH + (n+1) H(+)(in) = a plastoquinol + NAD(+) + n H(+)(out). It catalyses the reaction a plastoquinone + NADPH + (n+1) H(+)(in) = a plastoquinol + NADP(+) + n H(+)(out). Functionally, NDH shuttles electrons from NAD(P)H:plastoquinone, via FMN and iron-sulfur (Fe-S) centers, to quinones in the photosynthetic chain and possibly in a chloroplast respiratory chain. The immediate electron acceptor for the enzyme in this species is believed to be plastoquinone. Couples the redox reaction to proton translocation, and thus conserves the redox energy in a proton gradient. Required for the accumulation of both the NDH subcomplex A and NDHS. This Arabidopsis thaliana (Mouse-ear cress) protein is NAD(P)H-quinone oxidoreductase subunit T, chloroplastic.